The sequence spans 557 residues: Arginine--tRNA ligase (557 aa).

The short motif at 132 to 142 (ANPTGLLHMGN) is the 'HIGH' region element.

This sequence belongs to the class-I aminoacyl-tRNA synthetase family. In terms of assembly, monomer.

It is found in the cytoplasm. The catalysed reaction is tRNA(Arg) + L-arginine + ATP = L-arginyl-tRNA(Arg) + AMP + diphosphate. This is Arginine--tRNA ligase from Carboxydothermus hydrogenoformans (strain ATCC BAA-161 / DSM 6008 / Z-2901).